Here is a 194-residue protein sequence, read N- to C-terminus: Dihydrofolate reductase HdrB (194 aa).

Positions 18–194 constitute a DHFR domain; sequence RFVLVAAVAD…ADRGAEESDE (177 aa). NADP(+)-binding positions include Ala-24 and 30–36; that span reads VIGRDGT. Substrate is bound at residue Asp-44. 62 to 63 serves as a coordination point for NADP(+); it reads KT. Positions 69 and 78 each coordinate substrate. NADP(+) is bound by residues 84-85 and 123-130; these read TT and GGATVYEQ. Thr-141 provides a ligand contact to substrate. Residues 173 to 194 form a disordered region; sequence SFVTYERKQPAAADRGAEESDE.

The protein belongs to the dihydrofolate reductase family.

The catalysed reaction is (6S)-5,6,7,8-tetrahydrofolate + NADP(+) = 7,8-dihydrofolate + NADPH + H(+). The protein operates within cofactor biosynthesis; tetrahydrofolate biosynthesis; 5,6,7,8-tetrahydrofolate from 7,8-dihydrofolate: step 1/1. Maximum activity at KCl concentration of 0.5 M and activity decreases with increasing concentration of KCl. Functionally, key enzyme in folate metabolism. Catalyzes an essential reaction for de novo glycine and purine synthesis, and for DNA precursor synthesis. The chain is Dihydrofolate reductase HdrB (hdrB) from Haloferax volcanii (Halobacterium volcanii).